A 139-amino-acid chain; its full sequence is MTALLDVNVLIALGWPNHVHHAAAQRWFTQFSSNGWATTPITEAGYVRISSNRSVMQVSTTPAIAIAQLAAMTSLAGHTFWPDDVPLIVGSAGDRDAVSNHRRVTDCHLIALAARYGGRLVTFDAALADSASAGLVEVL.

Residues Leu4–Ala133 form the PINc domain. Positions 6 and 106 each coordinate Mg(2+).

The protein belongs to the PINc/VapC protein family. The cofactor is Mg(2+).

Its function is as follows. Toxic component of a type II toxin-antitoxin (TA) system. An RNase. Its toxic effect is neutralized by coexpression with cognate antitoxin VapB39. The sequence is that of Ribonuclease VapC39 from Mycobacterium tuberculosis (strain CDC 1551 / Oshkosh).